We begin with the raw amino-acid sequence, 241 residues long: 2,3,4,5-tetrahydropyridine-2,6-dicarboxylate N-acetyltransferase (241 aa).

The protein belongs to the transferase hexapeptide repeat family. DapH subfamily.

It carries out the reaction (S)-2,3,4,5-tetrahydrodipicolinate + acetyl-CoA + H2O = L-2-acetamido-6-oxoheptanedioate + CoA. It functions in the pathway amino-acid biosynthesis; L-lysine biosynthesis via DAP pathway; LL-2,6-diaminopimelate from (S)-tetrahydrodipicolinate (acetylase route): step 1/3. Functionally, catalyzes the transfer of an acetyl group from acetyl-CoA to tetrahydrodipicolinate. This Caldanaerobacter subterraneus subsp. tengcongensis (strain DSM 15242 / JCM 11007 / NBRC 100824 / MB4) (Thermoanaerobacter tengcongensis) protein is 2,3,4,5-tetrahydropyridine-2,6-dicarboxylate N-acetyltransferase.